A 1228-amino-acid polypeptide reads, in one-letter code: Multimerin-1 (1228 aa).

The N-terminal stretch at 1 to 19 (MKGARLFVLLSSLWSGGIG) is a signal peptide. N-linked (GlcNAc...) asparagine glycosylation occurs at N21. The segment at 68-98 (TPEARTSEDSLLKSTLPPSETSAPAEGVRNQ) is disordered. A compositionally biased stretch (polar residues) spans 79–89 (LKSTLPPSETS). 3 N-linked (GlcNAc...) asparagine glycosylation sites follow: N97, N114, and N120. An N-linked (GlcNAc...) (complex) asparagine glycan is attached at N136. The interval 157 to 200 (NTVGGTGGIGGVGGTGGVGNRAPRETYLSRGDSSSSQRTDYQKS) is disordered. Residues 160-175 (GGTGGIGGVGGTGGVG) show a composition bias toward gly residues. Residues 186-188 (RGD) carry the Cell attachment site motif. Positions 187–200 (GDSSSSQRTDYQKS) are enriched in polar residues. In terms of domain architecture, EMI spans 207–282 (GKNWCAYVHT…PGYSGPKCQL (76 aa)). Disulfide bonds link C211–C272, C238–C245, and C271–C280. An O-linked (Fuc) threonine glycan is attached at T216. T265 carries O-linked (Fuc) threonine glycosylation. Coiled-coil stretches lie at residues 333-365 (MKLT…KVSE) and 400-430 (NDMQ…IQKV). N-linked (GlcNAc...) asparagine glycosylation is present at N344. N-linked (GlcNAc...) asparagine glycans are attached at residues N431, N507, N541, N576, N618, N680, N729, N783, N816, N828, N840, N921, N933, N942, N981, and N1020. A coiled-coil region spans residues 503–523 (YESLNKTLSKLKEVHEQLLST). Coiled-coil stretches lie at residues 580 to 650 (SLEM…EILQ) and 675 to 726 (RKKI…EMED). Residues 819-869 (NFQKMYQMFNETTSQVRKYQQNMSHLEEKLLLTTKISKNFETRLQDIESKV) adopt a coiled-coil conformation. In terms of domain architecture, EGF-like spans 1041 to 1077 (EYSSCSRHPCQNGGTCINGRTSFTCACRHPFTGDNCT). 3 disulfides stabilise this stretch: C1045-C1056, C1050-C1065, and C1067-C1076. A glycan (O-linked (Fuc) threonine) is linked at T1055. A glycan (N-linked (GlcNAc...) asparagine) is linked at N1075. One can recognise a C1q domain in the interval 1096-1228 (RYAPMVAFFA…TFSGYLLYRT (133 aa)).

Multimeric. Composed of varying sized, disulfide-linked multimers, the smallest of which is a homotrimer. Proteolysis of the promultimerin in the N-terminal region, leads to the mature p155 form that is stored in platelets. Interacts with factor V/Va. The N-terminus is blocked. In terms of processing, extensively N-glycosylated. Post-translationally, O-fucosylated within the EMI domain (at Thr-216 and Thr-265) by FUT10/POFUT3 and FUT11/POFUT4. O-fucosylation at Thr-216 and Thr-1055 are required for facilitating protein folding and secretion. In terms of tissue distribution, synthesized by endothelial cells and megakaryocytes. Stored in platelet alpha granules and endothelial cell Weibel-Palade bodies, following activation of these cells, it is released and attached to megakaryocytes, platelets, endothelium and subendothelium of blood vessels. Not found in plasma. Found in vascular tissues such as placenta, lung, and liver.

Its subcellular location is the secreted. Its function is as follows. Carrier protein for platelet (but not plasma) factor V/Va. Plays a role in the storage and stabilization of factor V in platelets. Upon release following platelet activation, may limit platelet and plasma factor Va-dependent thrombin generation. Ligand for integrin alpha-IIb/beta-3 and integrin alpha-V/beta-3 on activated platelets, and may function as an extracellular matrix or adhesive protein. The chain is Multimerin-1 (MMRN1) from Homo sapiens (Human).